We begin with the raw amino-acid sequence, 418 residues long: Alpha-(1-&gt;3)-arabinofuranosyltransferase (418 aa).

Helical transmembrane passes span N25–I45, Y81–T101, L102–L122, L125–T145, I153–V173, V183–V203, L210–G230, M266–L286, P293–S312, I327–F349, and A372–I392.

This sequence belongs to the glycosyltransferase 87 family.

It is found in the cell membrane. The enzyme catalyses Adds an alpha-D-arabinofuranosyl group from trans,octacis-decaprenylphospho-beta-D-arabinofuranose at the 3-O-position of an alpha-(1-&gt;5)-arabinofuranan chain attached to a beta-(1-&gt;5)-galactofuranan chain.. Its pathway is cell wall biogenesis; cell wall polysaccharide biosynthesis. Involved in the biosynthesis of the arabinogalactan (AG) region of the mycolylarabinogalactan-peptidoglycan (mAGP) complex, an essential component of the corynebacterial cell wall. Catalyzes the addition of an arabinofuranosyl (Araf) residue from the sugar donor beta-D-arabinofuranosyl-1-monophosphoryldecaprenol (DPA) on the C-3 of an alpha-(1-&gt;5)-linked Araf from the arabinan backbone of AG. In Corynebacterium glutamicum (strain ATCC 13032 / DSM 20300 / JCM 1318 / BCRC 11384 / CCUG 27702 / LMG 3730 / NBRC 12168 / NCIMB 10025 / NRRL B-2784 / 534), this protein is Alpha-(1-&gt;3)-arabinofuranosyltransferase.